Consider the following 521-residue polypeptide: NAD(P)H-quinone oxidoreductase subunit 2 (521 aa).

A run of 14 helical transmembrane segments spans residues isoleucine 16–glycine 36, tryptophan 43–tryptophan 63, leucine 80–isoleucine 100, leucine 110–alanine 130, leucine 133–tyrosine 153, leucine 168–leucine 188, leucine 211–valine 231, proline 245–isoleucine 265, tryptophan 279–leucine 299, methionine 307–threonine 327, valine 335–phenylalanine 355, leucine 379–glycine 399, isoleucine 401–valine 421, and valine 467–phenylalanine 487.

It belongs to the complex I subunit 2 family. In terms of assembly, NDH-1 can be composed of about 15 different subunits; different subcomplexes with different compositions have been identified which probably have different functions.

The protein localises to the cellular thylakoid membrane. It catalyses the reaction a plastoquinone + NADH + (n+1) H(+)(in) = a plastoquinol + NAD(+) + n H(+)(out). The enzyme catalyses a plastoquinone + NADPH + (n+1) H(+)(in) = a plastoquinol + NADP(+) + n H(+)(out). NDH-1 shuttles electrons from an unknown electron donor, via FMN and iron-sulfur (Fe-S) centers, to quinones in the respiratory and/or the photosynthetic chain. The immediate electron acceptor for the enzyme in this species is believed to be plastoquinone. Couples the redox reaction to proton translocation, and thus conserves the redox energy in a proton gradient. Cyanobacterial NDH-1 also plays a role in inorganic carbon-concentration. The chain is NAD(P)H-quinone oxidoreductase subunit 2 from Crocosphaera subtropica (strain ATCC 51142 / BH68) (Cyanothece sp. (strain ATCC 51142)).